Consider the following 235-residue polypeptide: Sugar fermentation stimulation protein homolog (235 aa).

It belongs to the SfsA family.

This Bartonella henselae (strain ATCC 49882 / DSM 28221 / CCUG 30454 / Houston 1) (Rochalimaea henselae) protein is Sugar fermentation stimulation protein homolog.